The sequence spans 932 residues: LPS-assembly protein LptD (932 aa).

Residues 1–33 (MALKSPAFRRKFPLLVTGGLLALQPLATSYAVA) form the signal peptide. The tract at residues 54–87 (PVNNLPPRPVHEGAAVSSGTEAASEGETADRPML) is disordered.

It belongs to the LptD family. Component of the lipopolysaccharide transport and assembly complex. Interacts with LptE and LptA.

Its subcellular location is the cell outer membrane. In terms of biological role, together with LptE, is involved in the assembly of lipopolysaccharide (LPS) at the surface of the outer membrane. This Pseudomonas putida (strain GB-1) protein is LPS-assembly protein LptD.